The following is a 189-amino-acid chain: Probable thymidylate kinase 1 (189 aa).

9 to 16 contacts ATP; that stretch reads GIDGSGKT.

Belongs to the thymidylate kinase family.

It carries out the reaction dTMP + ATP = dTDP + ADP. This chain is Probable thymidylate kinase 1 (tmk1), found in Saccharolobus solfataricus (strain ATCC 35092 / DSM 1617 / JCM 11322 / P2) (Sulfolobus solfataricus).